We begin with the raw amino-acid sequence, 115 residues long: Nucleoid-associated protein Npun_F0448 (115 aa).

It belongs to the YbaB/EbfC family. Homodimer.

It is found in the cytoplasm. It localises to the nucleoid. Binds to DNA and alters its conformation. May be involved in regulation of gene expression, nucleoid organization and DNA protection. The polypeptide is Nucleoid-associated protein Npun_F0448 (Nostoc punctiforme (strain ATCC 29133 / PCC 73102)).